Here is an 805-residue protein sequence, read N- to C-terminus: Muscarinic acetylcholine receptor DM1 (805 aa).

Topologically, residues Met-1–Ser-100 are extracellular. Residues Thr-27 to Thr-43 are compositionally biased toward low complexity. A disordered region spans residues Thr-27–Ala-47. Residues Asn-65, Asn-84, and Asn-87 are each glycosylated (N-linked (GlcNAc...) asparagine). The chain crosses the membrane as a helical span at residues Leu-101–Gly-121. Residues Asn-122–Tyr-141 are Cytoplasmic-facing. The helical transmembrane segment at Phe-142 to Ala-162 threads the bilayer. Residues Val-163–Cys-177 lie on the Extracellular side of the membrane. A helical transmembrane segment spans residues Asp-178–Ile-198. Residues Ser-199–Arg-220 are Cytoplasmic-facing. Residues Ala-221 to Tyr-241 traverse the membrane as a helical segment. Topologically, residues Ser-242–Gln-266 are extracellular. The chain crosses the membrane as a helical span at residues Tyr-267 to Leu-287. At Tyr-288–Thr-718 the chain is on the cytoplasmic side. Disordered regions lie at residues Leu-302–Asn-322, Gly-340–Ser-359, and Gly-507–Asn-530. Composition is skewed to basic and acidic residues over residues Gly-308–Ser-318 and Asn-341–Ser-353. A compositionally biased stretch (low complexity) spans Gly-507–Gly-525. Residues Leu-719–Ile-739 form a helical membrane-spanning segment. Residues Lys-740–Glu-752 lie on the Extracellular side of the membrane. A helical transmembrane segment spans residues Leu-753 to Ala-773. The Cytoplasmic portion of the chain corresponds to Leu-774 to Asn-805.

The protein belongs to the G-protein coupled receptor 1 family. Muscarinic acetylcholine receptor subfamily. As to expression, intense staining in the glomeruli of the antennal lobes, the region of the nervous system containing terminals of antennal olfactory sensory neurons and mechanosensory neurons. Also a discrete group of neurosecretory cells in the pars intercerebralis of the brain.

Its subcellular location is the cell membrane. The protein resides in the postsynaptic cell membrane. Its function is as follows. The muscarinic acetylcholine receptor mediates various cellular responses, including inhibition of adenylate cyclase, breakdown of phosphoinositides and modulation of potassium channels through the action of G proteins. Primary transducing effect is Pi turnover. May have a role in the processing of olfactory and mechanosensory signals; regulation of neurosecretion. The protein is Muscarinic acetylcholine receptor DM1 (mAChR-A) of Drosophila melanogaster (Fruit fly).